Reading from the N-terminus, the 86-residue chain is Muscarinic toxin 7 (86 aa).

The first 21 residues, 1–21, serve as a signal peptide directing secretion; it reads MKTLLLTLVVVTIVCLDLGYT. Finger loop stretches follow at residues 23 to 37, 44 to 63, and 66 to 78; these read TCVKSNSIWFPTSED, LCFKRWQYISPRMYDFTRGC, and TCPKAEYRDVINC. 4 disulfide bridges follow: cysteine 24–cysteine 45, cysteine 38–cysteine 63, cysteine 67–cysteine 78, and cysteine 79–cysteine 84.

It belongs to the three-finger toxin family. Short-chain subfamily. Aminergic toxin sub-subfamily. Expressed by the venom gland.

It is found in the secreted. In terms of biological role, binds specifically and irreversibly to an allosteric site of the muscarinic acetylcholine M1 receptor (CHRM1) at subnanomolar concentrations and shows a very slow dissociation rate. It also inhibits agonist-mediated guanosine 5'-O-(3'-thiotriphosphate) (GTP-g-S) binding and downstream signaling, and decreases the dissociation rate of orthosteric antagonists (N-methylscopolamine (NMS) or pirenzepine). Is a potent negative allosteric modulator (NAM) for CHRM1 activation and a positive allosteric modulator (PAM) for antagonist binding. The protein is Muscarinic toxin 7 of Dendroaspis angusticeps (Eastern green mamba).